The primary structure comprises 385 residues: MAGSEPRGAGSPPPASDWGRLEAAILSGWRTFWYSVAKERATPTASRKEAAEETSALTRLPVDVQLYILSFLSPHDLCQLGSTDHYWNKTIRDPILWRYFLLRDLPSWSSVDWKSLPDLEILKKPISEVTDSTCLDYMEVYKMCCPYTRRALKASRPMYGVVTSFLHSLIIQNEPRFAMFGPGLEELNTSLVLSLMSSEDLCPTAGLPHRQIDGIGSGVNFQLNNQQKFNILILYSTTRKERDRAREEHTSTVNKMFSLQSEGDEQQGSRYSVIPQIQKVCEVVDGFIYVANAEAHRRHEWQDEFSRIMAMTDPAFGSSGRPMLVLSCISQADVKRMPCFYLAHELHLSLLNHPWMVQDTEAETLTGFLNGIEWILEEVESKRAK.

Phosphoserine occurs at positions 11 and 46. Residues 54–100 (TSALTRLPVDVQLYILSFLSPHDLCQLGSTDHYWNKTIRDPILWRYF) enclose the F-box domain.

Homodimer. Part of the SCF (SKP1-CUL1-F-box) E3 ubiquitin-protein ligase complex SCF(FBXO4) formed of CUL1, SKP1, RBX1 and FBXO4. Interacts with TERF1; this interaction is prevented in the presence of GNL3L. Identified in a complex with CRYAB and CCND1. Post-translationally, phosphorylation at Ser-11 varies during the cell cycle. It is low in resting cells and high in the S phase and the G2/M phase of the cell cycle. Phosphorylation is decreased during late G1 phase. Phosphorylation at Ser-11 is important for homodimerization and for optimal ubiquitin ligase activity towards CCND1.

It is found in the cytoplasm. It functions in the pathway protein modification; protein ubiquitination. Its function is as follows. Substrate recognition component of a SCF (SKP1-CUL1-F-box protein) E3 ubiquitin-protein ligase complex that mediates the ubiquitination and subsequent proteasomal degradation of target proteins. Promotes ubiquitination of cyclin-D1 (CCND1) and its subsequent proteasomal degradation. However, it does not act as a major regulator of CCND1 stability during the G1/S transition. Recognizes TERF1 and promotes its ubiquitination together with UBE2D1. Promotes ubiquitination of FXR1 following phosphorylation of FXR1 by GSK3B, leading to FXR1 degradation by the proteasome. This is F-box only protein 4 from Mus musculus (Mouse).